Consider the following 105-residue polypeptide: Guanidinium exporter (105 aa).

Residues 1-21 (MSWIILVIAGLLEVVWAVGLK) form a helical membrane-spanning segment. Residues 22–28 (YTHGFSR) lie on the Cytoplasmic side of the membrane. Residues 29-49 (LTPSVITVTAMIVSMALLAWA) form a helical membrane-spanning segment. Over 50 to 57 (MKSLPVGT) the chain is Periplasmic. The helical transmembrane segment at 58 to 78 (AYAVWTGIGAVGAAITGIVLL) threads the bilayer. At 79 to 81 (GES) the chain is on the cytoplasmic side. Residues 82 to 102 (ANPMRLASLALIVLGIIGLKL) traverse the membrane as a helical segment. Residues 103-105 (STH) lie on the Periplasmic side of the membrane.

It belongs to the drug/metabolite transporter (DMT) superfamily. Small multidrug resistance (SMR) (TC 2.A.7.1) family. Gdx/SugE subfamily.

The protein localises to the cell inner membrane. Guanidinium ion exporter. Couples guanidinium export to the proton motive force, exchanging one guanidinium ion for two protons. The protein is Guanidinium exporter of Escherichia coli O157:H7.